Reading from the N-terminus, the 494-residue chain is MAPRCWHWWRWSAWSGLRPSPSRSTPTPGFCQKFSTQEKTPQICVVGSGPAGFYTAQHLLKHHTHAHVDIYEKQLVPFGLVRFGVAPDHPEVKNVINTFTQTARSDRCAFQGNVVVGRDVSVPELREAYHAVVLSYGAEDHQPLGIPGEELPGVVSARAFVGWYNGLPENQELAPDLSCDTAVILGQGNVALDVARILLTPPEHLEKTDITEAALGALRQSRVKTVWIVGRRGPLQVAFTIKELREMIQLPGTRPILDPSDFLGLQDRIKDVPRPRRRLTELLLRTATEKPGVEEAARQALASRAWGLRFFRSPQQVLPTPDGQRVAGIRLAVTSLEGVGESTRAVPTGDVEDLPCGLLLSSVGYKSRPIDPSVPFDPKLGVIPNTEGRVVNVPGLYCSGWVKRGPTGVITTTMTDSFLTSQALLEDLKAGLLPSGPRPGYVAIQALLSNRGVRPVSFSDWEKLDAEEVSRGQGTGKPREKLVDRREMLRLLGH.

A mitochondrion-targeting transit peptide spans 1–34 (MAPRCWHWWRWSAWSGLRPSPSRSTPTPGFCQKF). FAD is bound by residues Ala51, Glu72, Leu80, and Val116. NADP(+) is bound by residues 187–190 (QGNV), 231–232 (RR), and Glu243. Ser313 bears the Phosphoserine mark. FAD contacts are provided by residues Trp401 and 408 to 410 (GVI). An NADP(+)-binding site is contributed by Gly408.

It belongs to the ferredoxin--NADP reductase type 1 family. In terms of assembly, monomer. Interacts directly with FDX1. It depends on FAD as a cofactor. As to expression, expressed in the adrenal, testis and ovary and to a lesser extent in the liver and kidney.

It localises to the mitochondrion inner membrane. It carries out the reaction 2 reduced [adrenodoxin] + NADP(+) + H(+) = 2 oxidized [adrenodoxin] + NADPH. The catalysed reaction is 2 reduced [2Fe-2S]-[ferredoxin] + NADP(+) + H(+) = 2 oxidized [2Fe-2S]-[ferredoxin] + NADPH. It participates in steroid metabolism; cholesterol metabolism. Functionally, serves as the first electron transfer protein in all the mitochondrial P450 systems including cholesterol side chain cleavage in all steroidogenic tissues, steroid 11-beta hydroxylation in the adrenal cortex, 25-OH-vitamin D3-24 hydroxylation in the kidney, and sterol C-27 hydroxylation in the liver. Also acts as a ferredoxin--NADP(+) reductase essential for coenzyme Q biosynthesis: together with FDX2, transfers the electrons required for the hydroxylation reaction performed by COQ6. The sequence is that of NADPH:adrenodoxin oxidoreductase, mitochondrial (Fdxr) from Mus musculus (Mouse).